We begin with the raw amino-acid sequence, 73 residues long: Conotoxin Asp7/Gla(3)-TxVI (73 aa).

The first 19 residues, 1-19, serve as a signal peptide directing secretion; that stretch reads MQKLIILLLVAAVLMSTQA. The propeptide occupies 20 to 44; the sequence is VLQEKRPKEKIKFLSKRKTDAEKQQ. Disulfide bonds link Cys48–Cys62, Cys55–Cys66, and Cys61–Cys71. 4-hydroxyproline is present on residues Pro49 and Pro54. Glu60 carries the 4-carboxyglutamate modification. A 6'-bromotryptophan modification is found at Trp64.

As to expression, expressed by the venom duct.

Its subcellular location is the secreted. This is Conotoxin Asp7/Gla(3)-TxVI from Conus textile (Cloth-of-gold cone).